Consider the following 510-residue polypeptide: GMP synthase [glutamine-hydrolyzing] (510 aa).

One can recognise a Glutamine amidotransferase type-1 domain in the interval 5 to 195; that stretch reads LVLVVDFGGQ…LFNVCNLKGD (191 aa). Cysteine 82 functions as the Nucleophile in the catalytic mechanism. Active-site residues include histidine 169 and glutamate 171. Positions 196-385 constitute a GMPS ATP-PPase domain; the sequence is WSMSSFAEQQ…LGIPHKLVWR (190 aa). 223–229 is an ATP binding site; it reads SGGVDSS.

Homodimer.

It catalyses the reaction XMP + L-glutamine + ATP + H2O = GMP + L-glutamate + AMP + diphosphate + 2 H(+). Its pathway is purine metabolism; GMP biosynthesis; GMP from XMP (L-Gln route): step 1/1. Its function is as follows. Catalyzes the synthesis of GMP from XMP. The chain is GMP synthase [glutamine-hydrolyzing] from Clostridium botulinum (strain Loch Maree / Type A3).